Reading from the N-terminus, the 338-residue chain is Protein RecA (338 aa).

66–73 (GPESSGKT) serves as a coordination point for ATP.

It belongs to the RecA family.

It localises to the cytoplasm. Functionally, can catalyze the hydrolysis of ATP in the presence of single-stranded DNA, the ATP-dependent uptake of single-stranded DNA by duplex DNA, and the ATP-dependent hybridization of homologous single-stranded DNAs. It interacts with LexA causing its activation and leading to its autocatalytic cleavage. In Geobacter sulfurreducens (strain ATCC 51573 / DSM 12127 / PCA), this protein is Protein RecA.